Reading from the N-terminus, the 354-residue chain is Ferrochelatase (354 aa).

H214 and E295 together coordinate Fe cation.

The protein belongs to the ferrochelatase family.

It localises to the cytoplasm. It catalyses the reaction heme b + 2 H(+) = protoporphyrin IX + Fe(2+). It participates in porphyrin-containing compound metabolism; protoheme biosynthesis; protoheme from protoporphyrin-IX: step 1/1. Its function is as follows. Catalyzes the ferrous insertion into protoporphyrin IX. The chain is Ferrochelatase from Burkholderia orbicola (strain AU 1054).